The sequence spans 158 residues: MVEKVPMTQGGFVKLQEELRFRQQEERPRIIEAIAEARAHGDLSENAEYHAAKEAQSHNEGRITELEDLTARAEVIDLSKMSGSKIKFGATVKLIDEDSDEEKTYQIVGDQEADVKAGRISISSPIARALIGKEVGDSIEVNAPGGAKGYEILAVQWG.

The protein belongs to the GreA/GreB family.

Functionally, necessary for efficient RNA polymerase transcription elongation past template-encoded arresting sites. The arresting sites in DNA have the property of trapping a certain fraction of elongating RNA polymerases that pass through, resulting in locked ternary complexes. Cleavage of the nascent transcript by cleavage factors such as GreA or GreB allows the resumption of elongation from the new 3'terminus. GreA releases sequences of 2 to 3 nucleotides. In Agrobacterium fabrum (strain C58 / ATCC 33970) (Agrobacterium tumefaciens (strain C58)), this protein is Transcription elongation factor GreA.